Reading from the N-terminus, the 207-residue chain is LysM and putative peptidoglycan-binding domain-containing protein 2 (207 aa).

In terms of domain architecture, LysM spans 61-105 (IEHRLSPSDTLQGIALKYGVTMEQIKRANKLFSTDCIFLRKSLNI). Residues 186 to 207 (AQRLKEEDLRHDDSYATCSYQH) form a disordered region. Basic and acidic residues predominate over residues 188-199 (RLKEEDLRHDDS).

In Xenopus tropicalis (Western clawed frog), this protein is LysM and putative peptidoglycan-binding domain-containing protein 2 (lysmd2).